We begin with the raw amino-acid sequence, 136 residues long: ATP synthase epsilon chain, plastid (136 aa).

Belongs to the ATPase epsilon chain family. F-type ATPases have 2 components, CF(1) - the catalytic core - and CF(0) - the membrane proton channel. CF(1) has five subunits: alpha(3), beta(3), gamma(1), delta(1), epsilon(1). CF(0) has three main subunits: a, b and c.

The protein localises to the plastid thylakoid membrane. Functionally, produces ATP from ADP in the presence of a proton gradient across the membrane. This is ATP synthase epsilon chain, plastid from Cuscuta reflexa (Southern Asian dodder).